A 79-amino-acid chain; its full sequence is Small ribosomal subunit protein bS18 (79 aa).

This sequence belongs to the bacterial ribosomal protein bS18 family. Part of the 30S ribosomal subunit. Forms a tight heterodimer with protein bS6.

Functionally, binds as a heterodimer with protein bS6 to the central domain of the 16S rRNA, where it helps stabilize the platform of the 30S subunit. In Bacillus pumilus (strain SAFR-032), this protein is Small ribosomal subunit protein bS18.